We begin with the raw amino-acid sequence, 417 residues long: 4-hydroxy-3-methylbut-2-en-1-yl diphosphate synthase (flavodoxin) (417 aa).

Cys304, Cys307, Cys350, and Glu357 together coordinate [4Fe-4S] cluster.

This sequence belongs to the IspG family. [4Fe-4S] cluster serves as cofactor.

The enzyme catalyses (2E)-4-hydroxy-3-methylbut-2-enyl diphosphate + oxidized [flavodoxin] + H2O + 2 H(+) = 2-C-methyl-D-erythritol 2,4-cyclic diphosphate + reduced [flavodoxin]. Its pathway is isoprenoid biosynthesis; isopentenyl diphosphate biosynthesis via DXP pathway; isopentenyl diphosphate from 1-deoxy-D-xylulose 5-phosphate: step 5/6. Functionally, converts 2C-methyl-D-erythritol 2,4-cyclodiphosphate (ME-2,4cPP) into 1-hydroxy-2-methyl-2-(E)-butenyl 4-diphosphate. The sequence is that of 4-hydroxy-3-methylbut-2-en-1-yl diphosphate synthase (flavodoxin) from Rhizobium meliloti (strain 1021) (Ensifer meliloti).